We begin with the raw amino-acid sequence, 169 residues long: S-ribosylhomocysteine lyase (169 aa).

His54, His58, and Cys128 together coordinate Fe cation.

This sequence belongs to the LuxS family. Homodimer. Requires Fe cation as cofactor.

It carries out the reaction S-(5-deoxy-D-ribos-5-yl)-L-homocysteine = (S)-4,5-dihydroxypentane-2,3-dione + L-homocysteine. Involved in the synthesis of autoinducer 2 (AI-2) which is secreted by bacteria and is used to communicate both the cell density and the metabolic potential of the environment. The regulation of gene expression in response to changes in cell density is called quorum sensing. Catalyzes the transformation of S-ribosylhomocysteine (RHC) to homocysteine (HC) and 4,5-dihydroxy-2,3-pentadione (DPD). This Aeromonas hydrophila subsp. hydrophila (strain ATCC 7966 / DSM 30187 / BCRC 13018 / CCUG 14551 / JCM 1027 / KCTC 2358 / NCIMB 9240 / NCTC 8049) protein is S-ribosylhomocysteine lyase.